The chain runs to 336 residues: Peroxidase 11 (336 aa).

Residues 1–20 (MMRLLFVFFMVHTIFIPCFS) form the signal peptide. 4 cysteine pairs are disulfide-bonded: C39-C119, C72-C77, C125-C331, and C204-C236. H70 serves as the catalytic Proton acceptor. D71, V74, G76, D78, and S80 together coordinate Ca(2+). A substrate-binding site is contributed by P167. Residue H197 coordinates heme b. T198 is a Ca(2+) binding site. N-linked (GlcNAc...) asparagine glycosylation is present at N246. Residues D251, T254, and D259 each contribute to the Ca(2+) site.

It belongs to the peroxidase family. Classical plant (class III) peroxidase subfamily. It depends on heme b as a cofactor. Requires Ca(2+) as cofactor. Expressed in roots and stems.

The protein resides in the secreted. It catalyses the reaction 2 a phenolic donor + H2O2 = 2 a phenolic radical donor + 2 H2O. Its function is as follows. Removal of H(2)O(2), oxidation of toxic reductants, biosynthesis and degradation of lignin, suberization, auxin catabolism, response to environmental stresses such as wounding, pathogen attack and oxidative stress. These functions might be dependent on each isozyme/isoform in each plant tissue. This is Peroxidase 11 (PER11) from Arabidopsis thaliana (Mouse-ear cress).